The following is a 150-amino-acid chain: Large ribosomal subunit protein bL9 (150 aa).

This sequence belongs to the bacterial ribosomal protein bL9 family.

Its function is as follows. Binds to the 23S rRNA. This chain is Large ribosomal subunit protein bL9, found in Cupriavidus taiwanensis (strain DSM 17343 / BCRC 17206 / CCUG 44338 / CIP 107171 / LMG 19424 / R1) (Ralstonia taiwanensis (strain LMG 19424)).